A 433-amino-acid chain; its full sequence is Adenylosuccinate synthetase (433 aa).

GTP contacts are provided by residues 18 to 24 (GDEGKGK) and 46 to 48 (GHT). Asp-19 serves as the catalytic Proton acceptor. The Mg(2+) site is built by Asp-19 and Gly-46. IMP is bound by residues 19-22 (DEGK), 44-47 (NAGH), Thr-136, Arg-150, Gln-229, Thr-244, and Arg-308. The Proton donor role is filled by His-47. Substrate is bound at residue 304–310 (VTTKRMR). GTP is bound by residues Arg-310, 336–338 (KID), and 420–422 (GTG).

Belongs to the adenylosuccinate synthetase family. As to quaternary structure, homodimer. It depends on Mg(2+) as a cofactor.

Its subcellular location is the cytoplasm. It catalyses the reaction IMP + L-aspartate + GTP = N(6)-(1,2-dicarboxyethyl)-AMP + GDP + phosphate + 2 H(+). It functions in the pathway purine metabolism; AMP biosynthesis via de novo pathway; AMP from IMP: step 1/2. Plays an important role in the de novo pathway and in the salvage pathway of purine nucleotide biosynthesis. Catalyzes the first committed step in the biosynthesis of AMP from IMP. The polypeptide is Adenylosuccinate synthetase (Schistosoma japonicum (Blood fluke)).